The sequence spans 447 residues: N-succinylarginine dihydrolase (447 aa).

Substrate-binding positions include 19-28 (AGLSFGNEAS), Asn-110, and 137-138 (HR). Residue Glu-174 is part of the active site. Arg-212 is a binding site for substrate. The active site involves His-248. Substrate contacts are provided by Asp-250 and Asn-359. The active-site Nucleophile is the Cys-365.

The protein belongs to the succinylarginine dihydrolase family. As to quaternary structure, homodimer.

It catalyses the reaction N(2)-succinyl-L-arginine + 2 H2O + 2 H(+) = N(2)-succinyl-L-ornithine + 2 NH4(+) + CO2. It functions in the pathway amino-acid degradation; L-arginine degradation via AST pathway; L-glutamate and succinate from L-arginine: step 2/5. Its function is as follows. Catalyzes the hydrolysis of N(2)-succinylarginine into N(2)-succinylornithine, ammonia and CO(2). In Salmonella arizonae (strain ATCC BAA-731 / CDC346-86 / RSK2980), this protein is N-succinylarginine dihydrolase.